The primary structure comprises 475 residues: Equilibrative nucleoside transporter 3 (475 aa).

Positions 1 to 24 are disordered; that stretch reads MAVVSEDDFQHSSNSTYRTTSSSL. Residues 1 to 53 lie on the Cytoplasmic side of the membrane; the sequence is MAVVSEDDFQHSSNSTYRTTSSSLRADQEALLEKLLDRPPPGLQRPEDRFCGT. Low complexity predominate over residues 12–23; the sequence is SSNSTYRTTSSS. Phosphoserine occurs at positions 21 and 23. The Dileucine internalization motif signature appears at 31-32; it reads LL. The helical transmembrane segment at 54 to 74 threads the bilayer; that stretch reads YIIFFSLGIGSLLPWNFFITA. The Extracellular segment spans residues 75–105; the sequence is KEYWMFKLRNSSSPATGEDPEGSDILNYFES. N-linked (GlcNAc...) asparagine glycosylation occurs at asparagine 84. The chain crosses the membrane as a helical span at residues 106–126; it reads YLAVASTVPSMLCLVANFLLV. Residues 127 to 134 are Cytoplasmic-facing; that stretch reads NRVAVHIR. The chain crosses the membrane as a helical span at residues 135–155; the sequence is VLASLTVILAIFMVITALVKV. The Extracellular portion of the chain corresponds to 156-162; the sequence is DTSSWTR. Residues 163-183 form a helical membrane-spanning segment; it reads GFFAVTIVCMVILSGASTVFS. The Cytoplasmic portion of the chain corresponds to 184 to 199; sequence SSIYGMTGSFPMRNSQ. Residues 200–220 traverse the membrane as a helical segment; it reads ALISGGAMGGTVSAVASLVDL. Residues 221 to 230 lie on the Extracellular side of the membrane; it reads AASSDVRNSA. The chain crosses the membrane as a helical span at residues 231–251; sequence LAFFLTATVFLVLCMGLYLLL. The Cytoplasmic portion of the chain corresponds to 252–305; that stretch reads SRLEYARYYMRPVLAAHVFSGEEELPQDSLSAPSVASRFIDSHTPPLRPILKKT. The helical transmembrane segment at 306–326 threads the bilayer; the sequence is ASLGFCVTYVFFITSLIYPAI. Residues 327–337 lie on the Extracellular side of the membrane; that stretch reads CTNIESLNKGS. A helical membrane pass occupies residues 338–358; sequence GSLWTTKFFIPLTTFLLYNFA. At 359–377 the chain is on the cytoplasmic side; that stretch reads DLCGRQLTAWIQVPGPNSK. The helical transmembrane segment at 378 to 398 threads the bilayer; the sequence is ALPGFVLLRTCLIPLFVLCNY. At 399-415 the chain is on the extracellular side; the sequence is QPRVHLKTVVFQSDVYP. Residues 416 to 436 form a helical membrane-spanning segment; it reads ALLSSLLGLSNGYLSTLALLY. Residues 437–454 are Cytoplasmic-facing; sequence GPKIVPRELAEATGVVMS. A helical membrane pass occupies residues 455-475; sequence FYVCLGLTLGSACSTLLVHLI.

This sequence belongs to the SLC29A/ENT transporter (TC 2.A.57) family. As to expression, widely expressed in both adult and fetal tissues. Highest levels in placenta, uterus, ovary, spleen, lymph node and bone marrow. Expressed in liver. Lowest levels in brain and heart. Expressed in macrophages.

The protein resides in the lysosome membrane. Its subcellular location is the late endosome membrane. The protein localises to the mitochondrion membrane. It localises to the cell membrane. It catalyses the reaction adenosine(in) = adenosine(out). The catalysed reaction is guanosine(in) = guanosine(out). The enzyme catalyses inosine(in) = inosine(out). It carries out the reaction uridine(out) = uridine(in). It catalyses the reaction cytidine(in) = cytidine(out). The catalysed reaction is thymidine(in) = thymidine(out). The enzyme catalyses 2'-deoxyadenosine(in) = 2'-deoxyadenosine(out). It carries out the reaction 2'-deoxycytidine(in) = 2'-deoxycytidine(out). It catalyses the reaction guanine(out) = guanine(in). The catalysed reaction is uracil(in) = uracil(out). The enzyme catalyses (R)-noradrenaline(out) = (R)-noradrenaline(in). It carries out the reaction dopamine(out) = dopamine(in). It catalyses the reaction serotonin(out) = serotonin(in). The catalysed reaction is tyramine(in) = tyramine(out). The enzyme catalyses ATP(in) = ATP(out). In terms of biological role, uniporter that mediates the facilitative transport of nucleoside across lysosomal and mitochondrial membranes. Functions as a non-electrogenic Na(+)-independent transporter. Substrate transport is pH-dependent and enhanced under acidic condition, probably reflecting the location of the transporter in acidic intracellular compartments. Proton is not a cotransporting ion but most likely change the ionization state of the transporter which dictates transport-permissible/impermissible conformation for nucleoside translocation. May direct the nucleoside transport from lysosomes to cytosol or cytosol to mitochondria to facilitate the fundamental function of salvage synthesis of nucleic acids. Involved in the transport of nucleosides (adenosine, guanosine, uridine, thymidine, cytidine and inosine) and deoxynucleosides (deoxyadenosine, deoxycytidine). Also mediates transport of purine nucleobases (adenine, guanine) and pyrimidine nucleobases (uracil). Also able to transport monoamine neurotransmitters dopamine, serotonin, noradrenaline and tyramine. Capable of transporting ATP. Mediates nucleoside export from lysosomes in macrophages, which regulates macrophage functions and numbers. The polypeptide is Equilibrative nucleoside transporter 3 (Homo sapiens (Human)).